A 233-amino-acid chain; its full sequence is Zinc import ATP-binding protein ZnuC (233 aa).

In terms of domain architecture, ABC transporter spans 6 to 222; it reads IEFRNVSKKF…SEFSNALSAL (217 aa). 38 to 45 serves as a coordination point for ATP; it reads GPNGAGKT.

This sequence belongs to the ABC transporter superfamily. Zinc importer (TC 3.A.1.15.5) family. As to quaternary structure, the complex is composed of two ATP-binding proteins (ZnuC), two transmembrane proteins (ZnuB) and a solute-binding protein (ZnuA).

It is found in the cell inner membrane. It carries out the reaction Zn(2+)(out) + ATP(in) + H2O(in) = Zn(2+)(in) + ADP(in) + phosphate(in) + H(+)(in). In terms of biological role, part of the ABC transporter complex ZnuABC involved in zinc import. Responsible for energy coupling to the transport system. This Rickettsia conorii (strain ATCC VR-613 / Malish 7) protein is Zinc import ATP-binding protein ZnuC.